The primary structure comprises 365 residues: MEKYEVNKTLELFETKIKDLENALDLDAINNRLKEIEPIMANPNFWNDSNQAKKISQELNQLTEKKQTITSIQNQYEDALMWLEEAKEGTESWDILEAEIDSLQKKISEFEIEVLLNGEYDHNNAILELHPGAGGTESMDWCGILMRMYERFAGYKGYKVEILNYLAGEEAGVKSVTLRISGPYAYGNLKSERGVHRLVRISPFDSNKRRHTSFVSCDVAPEIDETSEVELKDDDIRMDTFQSSGAGGQSVNTTYSAVRLTHIPTGIVVNIQNERSQIKNKEAAMQILKSKLIQKELEEKQAKLNALKGEKSDIGWGSQIRSYVFQPYQMVKDHRTNYEVGNIQSVMDGDIDGFINAYLKSKAYE.

Glutamine 249 carries the N5-methylglutamine modification.

Belongs to the prokaryotic/mitochondrial release factor family. Post-translationally, methylated by PrmC. Methylation increases the termination efficiency of RF2.

It is found in the cytoplasm. Its function is as follows. Peptide chain release factor 2 directs the termination of translation in response to the peptide chain termination codons UGA and UAA. In Acholeplasma laidlawii (strain PG-8A), this protein is Peptide chain release factor 2.